A 264-amino-acid polypeptide reads, in one-letter code: 3-methyl-2-oxobutanoate hydroxymethyltransferase (264 aa).

Residues Asp45 and Asp84 each coordinate Mg(2+). 3-methyl-2-oxobutanoate is bound by residues 45-46 (DS), Asp84, and Lys112. A Mg(2+)-binding site is contributed by Glu114. Glu181 (proton acceptor) is an active-site residue.

The protein belongs to the PanB family. As to quaternary structure, homodecamer; pentamer of dimers. The cofactor is Mg(2+).

It localises to the cytoplasm. The catalysed reaction is 3-methyl-2-oxobutanoate + (6R)-5,10-methylene-5,6,7,8-tetrahydrofolate + H2O = 2-dehydropantoate + (6S)-5,6,7,8-tetrahydrofolate. Its pathway is cofactor biosynthesis; (R)-pantothenate biosynthesis; (R)-pantoate from 3-methyl-2-oxobutanoate: step 1/2. Functionally, catalyzes the reversible reaction in which hydroxymethyl group from 5,10-methylenetetrahydrofolate is transferred onto alpha-ketoisovalerate to form ketopantoate. The chain is 3-methyl-2-oxobutanoate hydroxymethyltransferase from Escherichia coli (strain K12 / MC4100 / BW2952).